A 509-amino-acid polypeptide reads, in one-letter code: MGIQAAEISAILKEQIKNFGQDAQVAEVGRVLSVGDGIARVHGLDNVQAGEMVEFPGGIRGMALNLEVDNVGIVIFGSDRDIKEGDTVKRTNAIVDVPAGEGLLGRVVDGLGNPIDGKGPIVAKERRIADVKAPGIIPRKSVHEPMATGLKSVDAMIPIGRGQRELIIGDRQTGKTAIALDTILNQKSYNDANPGNKLHCFYVAIGQKRSTVAQLVKKLEEAGAMEYTTVVAATASDPAPMQFLAPYSATAMAEYFRDNGMHALIIYDDLSKQAVAYRQMSLLLRRPPGREAYPGDVFYLHSRLLERSAKLNEDFGSGSLTALPVIETQGGDVSAFIPTNVISITDGQIFLETELFYQGIRPAVNTGLSVSRVGSSAQTNSMKSVAGPVKLELAQYREMAAFAQFGSDLDAATQKLLNRGARLTELMKQPQYSPLTNAEIVAVIFAGTNGFLDAVPVKEVGRFEKGLLAYLRSTRKDVLEWLTKEDPKIKGDAEKKLKDAIAEFAKTFA.

Residue 169–176 coordinates ATP; that stretch reads GDRQTGKT.

It belongs to the ATPase alpha/beta chains family. In terms of assembly, F-type ATPases have 2 components, CF(1) - the catalytic core - and CF(0) - the membrane proton channel. CF(1) has five subunits: alpha(3), beta(3), gamma(1), delta(1), epsilon(1). CF(0) has four main subunits: a(1), b(1), b'(1) and c(9-12).

It is found in the cellular chromatophore membrane. It carries out the reaction ATP + H2O + 4 H(+)(in) = ADP + phosphate + 5 H(+)(out). Functionally, produces ATP from ADP in the presence of a proton gradient across the membrane. The alpha chain is a regulatory subunit. This is ATP synthase subunit alpha from Rhodobacter capsulatus (Rhodopseudomonas capsulata).